The primary structure comprises 305 residues: Oligopeptide transport system permease protein OppC (305 aa).

A run of 6 helical transmembrane segments spans residues 43-63 (AMVG…APMF), 105-125 (ISIF…VIWG), 166-185 (LFTI…ARIV), 212-232 (LFKH…TLTV), 236-256 (IFTE…LASW), and 274-294 (LFFP…VGDG). An ABC transmembrane type-1 domain is found at 103–292 (ARISIFIGVA…ITMFGFNVVG (190 aa)).

Belongs to the binding-protein-dependent transport system permease family. OppBC subfamily. The complex is composed of two ATP-binding proteins (OppD and OppF), two transmembrane proteins (OppB and OppC) and a solute-binding protein (OppA).

Its subcellular location is the cell membrane. Its function is as follows. Part of the ABC transporter complex OppABCDF involved in the uptake of oligopeptides. Probably responsible for the translocation of the substrate across the membrane. Required for sporulation and genetic competence. The polypeptide is Oligopeptide transport system permease protein OppC (Bacillus subtilis (strain 168)).